The chain runs to 314 residues: tRNA pseudouridine synthase B (314 aa).

Residue histidine 43 participates in substrate binding. Aspartate 48 functions as the Nucleophile in the catalytic mechanism. Tyrosine 76, tyrosine 179, and leucine 200 together coordinate substrate.

The protein belongs to the pseudouridine synthase TruB family. Type 1 subfamily.

The catalysed reaction is uridine(55) in tRNA = pseudouridine(55) in tRNA. Its function is as follows. Responsible for synthesis of pseudouridine from uracil-55 in the psi GC loop of transfer RNAs. This is tRNA pseudouridine synthase B from Escherichia coli O139:H28 (strain E24377A / ETEC).